We begin with the raw amino-acid sequence, 83 residues long: MKASMFLALAGLVLLFVVGYASESEEKEFPIELLSKIFAVDVFKGEERGCRGFGDSCTPGKNECCPNHACSNKHKWCKVYLGK.

An N-terminal signal peptide occupies residues 1-21 (MKASMFLALAGLVLLFVVGYA). Residues 22 to 48 (SESEEKEFPIELLSKIFAVDVFKGEER) constitute a propeptide that is removed on maturation. 3 disulfide bridges follow: cysteine 50-cysteine 65, cysteine 57-cysteine 70, and cysteine 64-cysteine 77. Leucine 81 bears the Leucine amide mark.

Belongs to the neurotoxin 10 (Hwtx-1) family. 15 (Hntx-3) subfamily. As to quaternary structure, monomer. In terms of tissue distribution, expressed by the venom gland.

The protein resides in the secreted. Functionally, lethal neurotoxin. Selectively blocks tetrodotoxin-sensitive voltage-gated sodium channels (Nav). Does not affect tetrodotoxin-resistant voltage-gated sodium channels or calcium channels. This chain is Mu-theraphotoxin-Hhn2f, found in Cyriopagopus hainanus (Chinese bird spider).